The following is a 337-amino-acid chain: U11/U12 small nuclear ribonucleoprotein 48 kDa protein (337 aa).

The CHHC U11-48K-type zinc finger occupies 55–82 (IAICPYDSNHRMPKSSLTKHMESCRLRK). Residues C58, H64, H74, and C78 each coordinate Zn(2+). Glycyl lysine isopeptide (Lys-Gly) (interchain with G-Cter in SUMO2) cross-links involve residues K87 and K104. Over residues 255 to 276 (HWQEEQGRAGDAAEKNEERRSA) the composition is skewed to basic and acidic residues. The disordered stretch occupies residues 255-337 (HWQEEQGRAG…HSHKRRKQKI (83 aa)). Positions 294–310 (RHRRARSRSPHKRKRNK) are enriched in basic residues. Positions 311–326 (DKSSESRRRKERDGER) are enriched in basic and acidic residues. Basic residues predominate over residues 327–337 (HHSHKRRKQKI).

In terms of assembly, component of the U11/U12 snRNPs that are part of the U12-type spliceosome. Not found in the major spliceosome.

It localises to the nucleus. In terms of biological role, likely involved in U12-type 5' splice site recognition. The polypeptide is U11/U12 small nuclear ribonucleoprotein 48 kDa protein (Snrnp48) (Mus musculus (Mouse)).